We begin with the raw amino-acid sequence, 409 residues long: Elongation factor Tu (409 aa).

The tr-type G domain maps to 10 to 214 (KPHLNIGTIG…AVDSFIPTPE (205 aa)). Positions 19 to 26 (GHVDHGKT) are G1. Residue 19–26 (GHVDHGKT) participates in GTP binding. Residue T26 participates in Mg(2+) binding. Residues 60–64 (GITIN) form a G2 region. A G3 region spans residues 81–84 (DCPG). Residues 81 to 85 (DCPGH) and 136 to 139 (NKED) contribute to the GTP site. The G4 stretch occupies residues 136–139 (NKED). The interval 174–176 (SGL) is G5.

This sequence belongs to the TRAFAC class translation factor GTPase superfamily. Classic translation factor GTPase family. EF-Tu/EF-1A subfamily. As to quaternary structure, monomer.

The protein localises to the cytoplasm. The catalysed reaction is GTP + H2O = GDP + phosphate + H(+). Its function is as follows. GTP hydrolase that promotes the GTP-dependent binding of aminoacyl-tRNA to the A-site of ribosomes during protein biosynthesis. The polypeptide is Elongation factor Tu (Nostoc punctiforme (strain ATCC 29133 / PCC 73102)).